An 879-amino-acid chain; its full sequence is MSTVEPNAYDPQQVETSAQQFWDATRAFQVDENSDKPKFYCLSMLPYPSGALHMGHVRNYTISDVVSRYKRMTGHNVLQPMGWDAFGLPAENAAIKNKTAPAKWTYANIEHMRAQLKSLGYAIDWSREFATCTPDYYVHEQRMFTRLMRKGLAYRRNAVVNWDPIDQTVLANEQVIDGRGWRSGALVEKREIPQWFLRITDYAQELLDGLDQLDGWPDSVKTMQRNWIGRSEGLEIQFDVRDTTGAALDPLRVFTTRPDTLMGVTFVSIAAEHPLAQHAAKSNPELASMLETLKHGGVSEAELETQEKRGMATGLTAVHPISGEEVPVWVANFVLMGYGTGAVMAVPGHDQRDFEFANKYGLPIVQVVKLREPRNDDEQAWDATQWRDWYTDKSRELELINSAEFDGLDYHGAFEALAERFERKGQGQRRINYRLRDWGVSRQRYWGCPIPVIYCAKCGAVPVPEDQLPVVLPENVEFAGTGSPIKTDPTWRQTTCPECGGPAERETDTFDTFMESSWYVARYTSPNARDMVDRRANYWMPADLYVGGIEHAILHLMYFRFYHKLMRDARLVDSDEPVTNLLTQGMVIAETFYRDADNGGKDWINPADVEIQRDERGRVVGASLIADGQPVHIGGTEKMSKSKNNGVDPQAMVAKYGADTVRLFSMFAAPPEQSLEWNEAGVDGMARFMRRLWVQVHKHVGEGAAALDVASLSAEQKAIRRKTHETIGKVDDDYGRRHSFNTAIAAVMELSNALAKFDDASAQGRAVRQEALEAMVLLLNPITPHASHALWQVLGRGETLLENVPFPQVDAAALVRDALTLAIQVNGKLRGTIEVAADAAREQIEALALAEPNAAKFLDGLSVRKIIIVPGKIVNIVAG.

Positions 46–56 (PYPSGALHMGH) match the 'HIGH' region motif. The 'KMSKS' region signature appears at 638–642 (KMSKS). Residue lysine 641 coordinates ATP.

The protein belongs to the class-I aminoacyl-tRNA synthetase family.

The protein localises to the cytoplasm. It carries out the reaction tRNA(Leu) + L-leucine + ATP = L-leucyl-tRNA(Leu) + AMP + diphosphate. The protein is Leucine--tRNA ligase of Xanthomonas campestris pv. campestris (strain 8004).